Here is a 513-residue protein sequence, read N- to C-terminus: ATP synthase subunit alpha (513 aa).

Residue 169-176 (GDRQTGKT) coordinates ATP.

The protein belongs to the ATPase alpha/beta chains family. In terms of assembly, F-type ATPases have 2 components, CF(1) - the catalytic core - and CF(0) - the membrane proton channel. CF(1) has five subunits: alpha(3), beta(3), gamma(1), delta(1), epsilon(1). CF(0) has three main subunits: a(1), b(2) and c(9-12). The alpha and beta chains form an alternating ring which encloses part of the gamma chain. CF(1) is attached to CF(0) by a central stalk formed by the gamma and epsilon chains, while a peripheral stalk is formed by the delta and b chains.

The protein resides in the cell inner membrane. It carries out the reaction ATP + H2O + 4 H(+)(in) = ADP + phosphate + 5 H(+)(out). In terms of biological role, produces ATP from ADP in the presence of a proton gradient across the membrane. The alpha chain is a regulatory subunit. The sequence is that of ATP synthase subunit alpha from Shewanella sp. (strain MR-4).